Reading from the N-terminus, the 313-residue chain is Bifunctional pinoresinol-lariciresinol reductase 1 (313 aa).

NADP(+) contacts are provided by residues 11 to 17 (GGTGYIG), Arg36, and Lys45. The Proton acceptor role is filled by Lys138. Arg142 contributes to the NADP(+) binding site. Position 271 (His271) interacts with substrate.

It belongs to the NmrA-type oxidoreductase family. Isoflavone reductase subfamily. As to quaternary structure, dimer.

It catalyses the reaction (+)-lariciresinol + NADP(+) = (+)-pinoresinol + NADPH + H(+). It carries out the reaction (-)-lariciresinol + NADP(+) = (-)-pinoresinol + NADPH + H(+). The enzyme catalyses (+)-secoisolariciresinol + NADP(+) = (-)-lariciresinol + NADPH + H(+). Functionally, reductase involved in lignan biosynthesis. Catalyzes the enantioselective sequential conversion of (-)-pinoresinol into (-)-lariciresinol and of (-)-lariciresinol into (+)-secoisolariciresinol. Can also convert with a lower efficiency (+)-pinoresinol into (+)-lariciresinol, but not (+)-lariciresinol into (-)-secoisolariciresinol. Abstracts the 4R-hydride from the NADPH cofactor during catalysis. The chain is Bifunctional pinoresinol-lariciresinol reductase 1 (PLR_Tp1) from Thuja plicata (Western red-cedar).